The sequence spans 146 residues: NADH-ubiquinone oxidoreductase chain 6 (146 aa).

4 helical membrane-spanning segments follow: residues 10-30, 43-63, 81-101, and 124-144; these read ILAIGLLSPVQSILALILLFV, LMGILYILVYVGAIAILFLFI, VIVLILIPLIPLDIAFEPIAI, and APMLVIIGIILIVSVIGAIAM.

Belongs to the complex I subunit 6 family.

It localises to the mitochondrion membrane. The catalysed reaction is a ubiquinone + NADH + 5 H(+)(in) = a ubiquinol + NAD(+) + 4 H(+)(out). Core subunit of the mitochondrial membrane respiratory chain NADH dehydrogenase (Complex I) that is believed to belong to the minimal assembly required for catalysis. Complex I functions in the transfer of electrons from NADH to the respiratory chain. The immediate electron acceptor for the enzyme is believed to be ubiquinone. This Candida albicans (strain SC5314 / ATCC MYA-2876) (Yeast) protein is NADH-ubiquinone oxidoreductase chain 6 (NAD6).